Consider the following 502-residue polypeptide: Acetyl-coenzyme A carboxylase carboxyl transferase subunit beta, chloroplastic (502 aa).

Residues 191 to 202 (GSDSESSSIRTS) show a composition bias toward low complexity. A disordered region spans residues 191-212 (GSDSESSSIRTSGNDSNFNVRE). Residues 226–497 (LWVQCENCYE…NQNSSGARGS (272 aa)) enclose the CoA carboxyltransferase N-terminal domain. Zn(2+) contacts are provided by Cys-230, Cys-233, Cys-249, and Cys-252. Residues 230–252 (CENCYELNYRSFFRSKMNICEQC) form a C4-type zinc finger.

The protein belongs to the AccD/PCCB family. In terms of assembly, acetyl-CoA carboxylase is a heterohexamer composed of biotin carboxyl carrier protein, biotin carboxylase and 2 subunits each of ACCase subunit alpha and ACCase plastid-coded subunit beta (accD). Zn(2+) is required as a cofactor.

The protein resides in the plastid. It is found in the chloroplast stroma. It catalyses the reaction N(6)-carboxybiotinyl-L-lysyl-[protein] + acetyl-CoA = N(6)-biotinyl-L-lysyl-[protein] + malonyl-CoA. Its pathway is lipid metabolism; malonyl-CoA biosynthesis; malonyl-CoA from acetyl-CoA: step 1/1. Its function is as follows. Component of the acetyl coenzyme A carboxylase (ACC) complex. Biotin carboxylase (BC) catalyzes the carboxylation of biotin on its carrier protein (BCCP) and then the CO(2) group is transferred by the transcarboxylase to acetyl-CoA to form malonyl-CoA. This is Acetyl-coenzyme A carboxylase carboxyl transferase subunit beta, chloroplastic from Chloranthus spicatus (Chulantree).